We begin with the raw amino-acid sequence, 239 residues long: Small ribosomal subunit protein uS3c (239 aa).

Residues isoleucine 43 to lysine 139 enclose the KH type-2 domain. The interval asparagine 50–serine 80 is disordered.

Belongs to the universal ribosomal protein uS3 family. Part of the 30S ribosomal subunit.

It is found in the plastid. The protein localises to the chloroplast. In Lolium perenne (Perennial ryegrass), this protein is Small ribosomal subunit protein uS3c (rps3).